We begin with the raw amino-acid sequence, 375 residues long: Protein DEK (375 aa).

The tract at residues 1–61 (MSASAPAAEG…LIVEGKREKK (61 aa)) is disordered. Serine 2 is subject to N-acetylserine. Residues threonine 13 and threonine 15 each carry the phosphothreonine modification. At serine 19 the chain carries Phosphoserine. Residues 19 to 30 (SEKEPEMPGPRE) are compositionally biased toward basic and acidic residues. Residues 31–47 (ESEEEEDEDDEEEEEEE) show a composition bias toward acidic residues. Serine 32 bears the Phosphoserine; by CK2 mark. Residues 48 to 61 (KEKSLIVEGKREKK) show a composition bias toward basic and acidic residues. Phosphoserine is present on residues serine 51, serine 72, serine 121, and serine 122. In terms of domain architecture, SAP spans 149 to 183 (LKKFRNAMLKSICEVLDLERSGVNSELVKRILNFL). A Phosphoserine; by CK2 modification is found at serine 159. The segment at 184 to 325 (MHPKPSGKPL…LKKPPTDEEL (142 aa)) is disordered. The span at 194-203 (PKSKKTCSKG) shows a compositional bias: basic residues. Threonine 199 is modified (phosphothreonine; by CK2). 2 positions are modified to phosphoserine; by CK2: serine 201 and serine 204. A Nuclear localization signal motif is present at residues 205–221 (KKERNSSGMARKAKRTK). Residues serine 210, serine 227, serine 230, serine 231, and serine 232 each carry the phosphoserine modification. Serine 243, serine 244, and serine 251 each carry phosphoserine; by CK2. Residues 243–253 (SSDDEDKESEE) show a composition bias toward acidic residues. The segment covering 258–277 (KTAKREKPKQKATSKSKKSV) has biased composition (basic residues). Over residues 278–296 (KSANVKKADSSTTKKNQNS) the composition is skewed to low complexity. ADP-ribosylserine is present on serine 279. Residues serine 287 and serine 288 each carry the phosphoserine; by CK2 modification. Phosphothreonine; by CK2 is present on residues threonine 289 and threonine 290. A phosphoserine; by CK2 mark is found at serine 296, serine 301, serine 303, serine 306, and serine 307. A DEK-C domain is found at 319–375 (PPTDEELKETIKKLLASANLEEVTMKQICKKVYENYPTYDLTERKDFIKTTVKELIS). 2 consecutive DNA-binding regions follow at residues 337 to 351 (NLEE…KKVY) and 367 to 371 (KTTVK).

As to quaternary structure, found in a mRNA splicing-dependent exon junction complex (EJC) with DEK, RBM8A, RNPS1, SRRM1 and ALYREF/THOC4. Interacts with histones H2A, H2B, H3, H4, acetylated histone H4, non-phosphorylated DAXX and HDAC2. Component of the B-WICH complex, at least composed of SMARCA5/SNF2H, BAZ1B/WSTF, SF3B1, DEK, MYO1C, ERCC6, MYBBP1A and DDX21. Binds DNA. Post-translationally, phosphorylated by CK2. Phosphorylation fluctuates during the cell cycle with a moderate peak during G(1) phase, and weakens the binding of DEK to DNA. Ubiquitous. Expressed at relatively high levels.

It is found in the nucleus. In terms of biological role, involved in chromatin organization. The chain is Protein DEK (DEK) from Homo sapiens (Human).